The chain runs to 146 residues: MPLVPKRVKHRREFRGKMRGAAKGGKYIAFGEYGLEALESHWITNRQIEAARVAMTRYMKRGGKVWIRIFPQKSYTAKGVGVRMGSGKGAPAGWVAVVKREKIMFEIGGVDEATAREALRLASTKLPIKTKFVTRSSEVGGESNEG.

Belongs to the universal ribosomal protein uL16 family. In terms of assembly, part of the 50S ribosomal subunit.

Its function is as follows. Binds 23S rRNA and is also seen to make contacts with the A and possibly P site tRNAs. The sequence is that of Large ribosomal subunit protein uL16 from Lactobacillus helveticus (strain DPC 4571).